The chain runs to 278 residues: Transcription initiation factor TFIID subunit 9 (278 aa).

The tract at residues 193 to 278 (TTTKTVGSSG…EEEEFEFVTN (86 aa)) is disordered. A compositionally biased stretch (gly residues) spans 200–210 (SSGGSGGGGGQ). Residues 231-240 (AAAVGSIAGA) show a composition bias toward low complexity. The segment covering 241-259 (SGSGAGSASGGGGGGGSSG) has biased composition (gly residues). Residues 269–278 (EEEEFEFVTN) show a composition bias toward acidic residues.

It belongs to the TAF9 family. In terms of assembly, belongs to the TFIID complex which is composed of TATA binding protein (Tbp) and a number of TBP-associated factors (TAFs). Taf9 and Taf6 exist as a heterotetramer. Interacts with e(y)2.

Its subcellular location is the nucleus. Functionally, TFIID is a multimeric protein complex that plays a central role in mediating promoter responses to various activators and repressors. The polypeptide is Transcription initiation factor TFIID subunit 9 (Drosophila melanogaster (Fruit fly)).